Here is a 56-residue protein sequence, read N- to C-terminus: ComX pheromone (56 aa).

The propeptide occupies 1 to 50 (MMQDLINYFLSYPEVLKKLKNREACLIGFSSNETETIIKAYNDYHLSSPT). Trp54 carries the tryptophan derivative modification. A lipid anchor (3'-farnesyl-2',N2-cyclotryptophan) is attached at Trp54.

In terms of assembly, interacts directly with the sensor histidine kinase ComP and stimulates its activity. Post-translationally, trp-54 is modified by farnesylation, which is essential for activity. Modified by the tryptophan prenyltransferase ComQ before export to the extracellular environment. The type of isoprenyl derivative differs among the different pherotypes and depends on ComX primary sequence.

It localises to the secreted. Its function is as follows. Part of a major quorum-sensing system that regulates the development of genetic competence. Acts through the activation of the two-component regulatory system ComP/ComA composed of a sensor histidine kinase, ComP, and a response regulator, ComA. The polypeptide is ComX pheromone (Bacillus mojavensis).